Here is an 84-residue protein sequence, read N- to C-terminus: Cysteine-rich protamine (84 aa).

2 cysteine pairs are disulfide-bonded: C16-C24 and C64-C80.

In terms of assembly, cross-linked by interchain disulfide bonds around the DNA-helix. In terms of tissue distribution, testis.

It is found in the nucleus. It localises to the chromosome. Protamines substitute for histones in the chromatin of sperm during the haploid phase of spermatogenesis. They compact sperm DNA into a highly condensed, stable and inactive complex. This protamine condenses spermiogenic chromatin in a pattern which comprises fibers with a progressively larger diameter and lamellae that finally undergo definitive coalescence. This is Cysteine-rich protamine from Eledone cirrhosa (Curled octopus).